Reading from the N-terminus, the 270-residue chain is Formamidopyrimidine-DNA glycosylase (270 aa).

The active-site Schiff-base intermediate with DNA is the Pro-2. Catalysis depends on Glu-3, which acts as the Proton donor. Residue Lys-58 is the Proton donor; for beta-elimination activity of the active site. Positions 91, 110, and 151 each coordinate DNA. The segment at 236 to 270 (FAYGRGGQPCKVCGTTLREIKLGQRASVYCPKCQR) adopts an FPG-type zinc-finger fold. The active-site Proton donor; for delta-elimination activity is Arg-260.

This sequence belongs to the FPG family. As to quaternary structure, monomer. Zn(2+) serves as cofactor.

The enzyme catalyses Hydrolysis of DNA containing ring-opened 7-methylguanine residues, releasing 2,6-diamino-4-hydroxy-5-(N-methyl)formamidopyrimidine.. It catalyses the reaction 2'-deoxyribonucleotide-(2'-deoxyribose 5'-phosphate)-2'-deoxyribonucleotide-DNA = a 3'-end 2'-deoxyribonucleotide-(2,3-dehydro-2,3-deoxyribose 5'-phosphate)-DNA + a 5'-end 5'-phospho-2'-deoxyribonucleoside-DNA + H(+). Functionally, involved in base excision repair of DNA damaged by oxidation or by mutagenic agents. Acts as a DNA glycosylase that recognizes and removes damaged bases. Has a preference for oxidized purines, such as 7,8-dihydro-8-oxoguanine (8-oxoG). Has AP (apurinic/apyrimidinic) lyase activity and introduces nicks in the DNA strand. Cleaves the DNA backbone by beta-delta elimination to generate a single-strand break at the site of the removed base with both 3'- and 5'-phosphates. The protein is Formamidopyrimidine-DNA glycosylase of Pseudomonas syringae pv. tomato (strain ATCC BAA-871 / DC3000).